The following is a 423-amino-acid chain: ATP-citrate synthase alpha chain protein 1 (423 aa).

3 residues coordinate citrate: Asn343, Thr345, and Arg376.

It belongs to the succinate/malate CoA ligase beta subunit family. In terms of assembly, heterooctamer of 4 alpha and 4 beta chains. As to expression, expressed in trichomes, epidermal leaf cells, anther tapetal cells, stigma and in young vascular bundles of expanding leaves, cotyledons, roots, pedicel of flowers and siliques.

Its subcellular location is the cytoplasm. The protein resides in the cytosol. The enzyme catalyses oxaloacetate + acetyl-CoA + ADP + phosphate = citrate + ATP + CoA. ATP citrate-lyase is the primary enzyme responsible for the synthesis of cytosolic acetyl-CoA, used for the elongation of fatty acids and biosynthesis of isoprenoids, flavonoids and malonated derivatives. May supply substrate to the cytosolic acetyl-CoA carboxylase, which generates the malonyl-CoA used for the synthesis of a multitude of compounds, including very long chain fatty acids and flavonoids. Required for normal growth and development and elongation of C18 fatty acids to C20 to C24 fatty acids in seeds. In contrast to all known animal ACL enzymes having a homomeric structure, plant ACLs are composed of alpha and beta chains. This is ATP-citrate synthase alpha chain protein 1 (ACLA-1) from Arabidopsis thaliana (Mouse-ear cress).